The following is a 559-amino-acid chain: MASSNLLLEVQFLHIPSLSQKQANPLSCRKFSSLDWKQEIGLKKDVFFRCHGLLSSVCIDNVNDHAERSSEFHHYGVGTNLRARVKPMKQFGLSSDGPITENDEETNNEILHNLCSNGKLTDACKLVEVMARHNQVPHFPSCSNLVRGLARIDQLDKAMCILRVMVMSGGVPDTITYNMIIGNLCKKGHIRTALVLLEDMSLSGSPPDVITYNTVIRCMFDYGNAEQAIRFWKDQLQNGCPPFMITYTVLVELVCRYCGSARAIEVLEDMAVEGCYPDIVTYNSLVNYNCRRGNLEEVASVIQHILSHGLELNTVTYNTLLHSLCSHEYWDEVEEILNIMYQTSYCPTVITYNILINGLCKARLLSRAIDFFYQMLEQKCLPDIVTYNTVLGAMSKEGMVDDAIELLGLLKNTCCPPGLITYNSVIDGLAKKGLMKKALELYHQMLDAGIFPDDITRRSLIYGFCRANLVEEAGQVLKETSNRGNGIRGSTYRLVIQGLCKKKEIEMAIEVVEIMLTGGCKPDETIYTAIVKGVEEMGMGSEAVQLQKKLKQWKLLKEV.

PPR repeat units follow at residues Asp-103–Pro-137, His-138–Pro-172, Asp-173–Pro-207, Asp-208–Pro-242, Phe-243–Pro-277, Asp-278–Leu-312, Asn-313–Pro-347, Thr-348–Pro-382, Asp-383–Pro-417, Gly-418–Pro-452, Asp-453–Ile-487, Arg-488–Pro-522, and Asp-523–Lys-557.

This sequence belongs to the PPR family. P subfamily.

This Arabidopsis thaliana (Mouse-ear cress) protein is Pentatricopeptide repeat-containing protein At1g08610.